Here is a 278-residue protein sequence, read N- to C-terminus: NH(3)-dependent NAD(+) synthetase (278 aa).

39–46 (GVSGGVDS) provides a ligand contact to ATP. Aspartate 45 lines the Mg(2+) pocket. Residue arginine 121 participates in deamido-NAD(+) binding. Threonine 141 serves as a coordination point for ATP. Glutamate 146 contacts Mg(2+). Deamido-NAD(+) contacts are provided by lysine 154 and aspartate 161. Positions 170 and 192 each coordinate ATP. Deamido-NAD(+) is bound at residue 252-253 (HK).

It belongs to the NAD synthetase family. As to quaternary structure, homodimer.

It catalyses the reaction deamido-NAD(+) + NH4(+) + ATP = AMP + diphosphate + NAD(+) + H(+). The protein operates within cofactor biosynthesis; NAD(+) biosynthesis; NAD(+) from deamido-NAD(+) (ammonia route): step 1/1. Catalyzes the ATP-dependent amidation of deamido-NAD to form NAD. Uses ammonia as a nitrogen source. This chain is NH(3)-dependent NAD(+) synthetase, found in Saccharolobus solfataricus (strain ATCC 35092 / DSM 1617 / JCM 11322 / P2) (Sulfolobus solfataricus).